The following is a 75-amino-acid chain: UPF0352 protein VV1_3121 (75 aa).

It belongs to the UPF0352 family.

This is UPF0352 protein VV1_3121 from Vibrio vulnificus (strain CMCP6).